Reading from the N-terminus, the 126-residue chain is Adenosine 5'-monophosphoramidase HINT1 (126 aa).

N-acetylalanine is present on alanine 2. The 109-residue stretch at 18 to 126 folds into the HIT domain; it reads IFGKIIRKEI…GGRQMHWPPG (109 aa). Residues lysine 21 and lysine 30 each carry the N6-acetyllysine modification. An AMP-binding site is contributed by 43-44; the sequence is DI. Residues serine 45 and serine 72 each carry the phosphoserine modification. Residues asparagine 99, 105–107, and 112–114 contribute to the AMP site; these read GQS and HLH. Residues 110-114 carry the Histidine triad motif motif; the sequence is HVHLH. Residue histidine 112 is the Tele-AMP-histidine intermediate of the active site.

Belongs to the HINT family. As to quaternary structure, homodimer. Interacts with CDK7. Interacts with RUVBL1 and RUVBL2 and is associated with the LEF1/TCF1-CTNNB1 complex and with a KAT5 histone acetyltransferase complex. Identified in a complex with MITF and CTNNB1. Interacts with CDC34 and RBX1, and is part of a SCF (SKP2-CUL1-F-box protein) E3 ubiquitin-protein ligase complex. Interacts with SUMO1, SUMO2 and RGS17. Interacts with the Ten-1 ICD form of TENM1. Interacts with CALM1; interaction increases in the presence of calcium ions. In terms of tissue distribution, widely expressed.

Its subcellular location is the cytoplasm. It is found in the nucleus. It carries out the reaction adenosine 5'-phosphoramidate + H2O = AMP + NH4(+). Its function is as follows. Exhibits adenosine 5'-monophosphoramidase activity, hydrolyzing purine nucleotide phosphoramidates with a single phosphate group such as adenosine 5'monophosphoramidate (AMP-NH2) to yield AMP and NH2. Hydrolyzes adenosine 5'monophosphomorpholidate (AMP-morpholidate) and guanosine 5'monophosphomorpholidate (GMP-morpholidate). Hydrolyzes lysyl-AMP (AMP-N-epsilon-(N-alpha-acetyl lysine methyl ester)) generated by lysine tRNA ligase, as well as Met-AMP, His-AMP and Asp-AMP, lysyl-GMP (GMP-N-epsilon-(N-alpha-acetyl lysine methyl ester)) and AMP-N-alanine methyl ester. Hydrolyzes 3-indolepropionic acyl-adenylate, tryptamine adenosine phosphoramidate monoester and other fluorogenic purine nucleoside tryptamine phosphoramidates in vitro. Can also convert adenosine 5'-O-phosphorothioate and guanosine 5'-O-phosphorothioate to the corresponding nucleoside 5'-O-phosphates with concomitant release of hydrogen sulfide. In addition, functions as scaffolding protein that modulates transcriptional activation by the LEF1/TCF1-CTNNB1 complex and by the complex formed with MITF and CTNNB1. Modulates p53/TP53 levels and p53/TP53-mediated apoptosis. Modulates proteasomal degradation of target proteins by the SCF (SKP2-CUL1-F-box protein) E3 ubiquitin-protein ligase complex. Also exhibits SUMO-specific isopeptidase activity, deconjugating SUMO1 from RGS17. Deconjugates SUMO1 from RANGAP1. This chain is Adenosine 5'-monophosphoramidase HINT1 (HINT1), found in Homo sapiens (Human).